Reading from the N-terminus, the 181-residue chain is Histone H1 (181 aa).

Disordered stretches follow at residues 1–23 and 81–181; these read MTET…THPP and TKGA…PKKK. The segment covering 8–19 has biased composition (basic residues); that stretch reads KPKKVSKPKAKP. An H15 domain is found at 20-94; the sequence is THPPTSVMVM…GASGSFKLAA (75 aa). 2 stretches are compositionally biased toward basic residues: residues 103–119 and 145–181; these read AVAK…KAAA and KPKK…PKKK.

This sequence belongs to the histone H1/H5 family.

It localises to the nucleus. Its subcellular location is the chromosome. Functionally, histones H1 are necessary for the condensation of nucleosome chains into higher-order structures. The chain is Histone H1 from Tigriopus californicus (Marine copepod).